The primary structure comprises 237 residues: 2,3,4,5-tetrahydropyridine-2,6-dicarboxylate N-acetyltransferase (237 aa).

Belongs to the transferase hexapeptide repeat family. DapH subfamily.

It carries out the reaction (S)-2,3,4,5-tetrahydrodipicolinate + acetyl-CoA + H2O = L-2-acetamido-6-oxoheptanedioate + CoA. It participates in amino-acid biosynthesis; L-lysine biosynthesis via DAP pathway; LL-2,6-diaminopimelate from (S)-tetrahydrodipicolinate (acetylase route): step 1/3. Catalyzes the transfer of an acetyl group from acetyl-CoA to tetrahydrodipicolinate. This chain is 2,3,4,5-tetrahydropyridine-2,6-dicarboxylate N-acetyltransferase, found in Alkaliphilus metalliredigens (strain QYMF).